A 738-amino-acid polypeptide reads, in one-letter code: Nucleoprotein (738 aa).

Positions 334–363 form a coiled coil; that stretch reads VNVGEQYQQLREAATEAEKQLQQYAETREL. Residues 418–640 form a disordered region; sequence GDRYPDDNDI…QGSESEALPI (223 aa). Acidic residues predominate over residues 461 to 476; the sequence is PYDDESNNYPDYEDSA. Positions 544–564 are enriched in polar residues; that stretch reads PGSNTNQPQGNMSSTLQSMTP. A compositionally biased stretch (acidic residues) spans 567–594; the sequence is EESEPDDQKDDDDESLTSLDSEGDEDVE. The span at 616-625 shows a compositional bias: polar residues; it reads VDTNQQNGPS.

It belongs to the filoviruses nucleoprotein family. In terms of assembly, homooligomer. Homomultimerizes to form the nucleocapsid. Binds to viral genomic RNA. Interacts with VP35 and VP30 to form the nucleocapsid. Interacts with host PPP2R5C; this interaction leads to VP30 dephosphorylation and viral transcription. Interacts with VP24; this interaction facilitates nucleocapsid assembly and genome packaging. Interacts with matrix protein VP40; this interaction allows recruitment of the nucleocapsid into progeny virions. Interacts with host STAU1. Interacts with host NXF1 (via RNA-binding domain); this interaction recruits NXF1 to the inclusion bodies were viral replication takes place, probably to export viral mRNA-NXF1 complexes from these sites. Interacts with host CCDC92; this interaction sequesters NP in the host cytoplasm. Interacts with host TRIM14. In terms of processing, phosphorylated and O-glycosylated by host. Acetylated by host EP300 in vitro.

The protein localises to the virion. Its subcellular location is the host cytoplasm. Oligomerizes into helical capsid to encapsidate the viral genome, protecting it from nucleases and the cellular innate immune response. VP35 binds to and stabilizes monomeric NP, keeping it soluble. Upon virus replication, NP is recruited to bind cooperatively viral genomic RNA and VP35 is released. The encapsidated genomic RNA is termed the nucleocapsid and serves as template for transcription and replication. The nucleocapsid is helical with a pitch of 10.81 NP per turn and a diameter of about 22nm. Each NP binds to six nucleotides of viral genomic RNA, three being exposed to the solvant and three hidden into the nucleocapsid. Also recruits host PPP2R5C phosphatase to dephosphorylate VP30 and thereby promote viral transcription. Upon virion assembly and budding, NP binds to VP24 and possibly host STAU1. This Sudan ebolavirus (strain Human/Uganda/Gulu/2000) (SEBOV) protein is Nucleoprotein (NP).